Here is a 400-residue protein sequence, read N- to C-terminus: Phosphoglycerate kinase (400 aa).

Residues 22–24 (DFN), Arg-38, 61–64 (HLGR), Arg-119, and Arg-152 each bind substrate. ATP-binding positions include Lys-205, Gly-296, Glu-327, and 353 to 356 (GGDT).

This sequence belongs to the phosphoglycerate kinase family. Monomer.

The protein localises to the cytoplasm. The enzyme catalyses (2R)-3-phosphoglycerate + ATP = (2R)-3-phospho-glyceroyl phosphate + ADP. It functions in the pathway carbohydrate degradation; glycolysis; pyruvate from D-glyceraldehyde 3-phosphate: step 2/5. This is Phosphoglycerate kinase from Campylobacter jejuni subsp. jejuni serotype O:6 (strain 81116 / NCTC 11828).